The primary structure comprises 194 residues: Probable molybdenum cofactor guanylyltransferase (194 aa).

GTP contacts are provided by residues 8 to 10 (LAG), K20, and D99. D99 lines the Mg(2+) pocket.

This sequence belongs to the MobA family. Requires Mg(2+) as cofactor.

The protein localises to the cytoplasm. The catalysed reaction is Mo-molybdopterin + GTP + H(+) = Mo-molybdopterin guanine dinucleotide + diphosphate. In terms of biological role, transfers a GMP moiety from GTP to Mo-molybdopterin (Mo-MPT) cofactor (Moco or molybdenum cofactor) to form Mo-molybdopterin guanine dinucleotide (Mo-MGD) cofactor. The chain is Probable molybdenum cofactor guanylyltransferase from Synechococcus elongatus (strain ATCC 33912 / PCC 7942 / FACHB-805) (Anacystis nidulans R2).